A 306-amino-acid polypeptide reads, in one-letter code: MMSNDSQSEKRTAKWTGSGTPIAEGEESSSPSAHQTRQKATAADDDDDQQITDLEQELAELDLEEQRKAKKKRIASLQRQIEEKRNKLATVEISDLNEKENKNVVNVADGLAWSYYSGYLKLVLPRLEQRISESEKFRHKITDKKLYILLPKSCFTCDDIEHADSRVKWAGNLPESKINRGGIKERSYKHAVHEIVMPPFPDGTGEKYHFIVEYATPLMTLYDMSKFADAQLTDPERDHQVLLFMQKLTELLEKSKDCKGQYDCRGKYELVSFDEEEDKIADILIARHNNANKVGEESEELSIPVQ.

Residues 1–50 (MMSNDSQSEKRTAKWTGSGTPIAEGEESSSPSAHQTRQKATAADDDDDQQ) form a disordered region. Positions 119, 180, and 186 each coordinate 2',3'-cGAMP.

It belongs to the STING family.

In terms of biological role, facilitator of innate immune signaling that acts as a sensor of second messenger signals produced by cyclic GMP-AMP synthase-like receptors (cGLRs) and promotes the production of type I interferon. Innate immune response is triggered in response to nucleotides from viruses and bacteria delivered to the cytoplasm. Acts by binding cyclic dinucleotides: recognizes and binds 2'-3' linked cGAMP (2'-3'-cGAMP), a second messengers produced by cGLRs in response to nucleotides in the cytosol, such as double-stranded RNA (dsRNA). Upon binding to 2'-3'-cGAMP, oligomerizes and promotes the recruitment and subsequent activation of the transcription factor IRF3 to induce expression of type I interferon. The chain is Stimulator of interferon genes protein 5 from Stylophora pistillata (Smooth cauliflower coral).